The primary structure comprises 470 residues: Neuronal acetylcholine receptor subunit beta-4 (470 aa).

A signal peptide spans 1-3; the sequence is STA. Topologically, residues 4–216 are extracellular; that stretch reads ADAEEKLMNH…IIKRKPLFYT (213 aa). Residues N29, N118, and N146 are each glycosylated (N-linked (GlcNAc...) asparagine). Cysteines 133 and 147 form a disulfide. The helical transmembrane segment at 217–237 threads the bilayer; that stretch reads INLIIPCVLITSLAILVFYLP. The Cytoplasmic portion of the chain corresponds to 238 to 245; it reads SDCGEKMT. E242 serves as a coordination point for Na(+). A helical transmembrane segment spans residues 246–266; it reads LCISVLLALTVFLLLISKIVP. The Extracellular portion of the chain corresponds to 267–278; that stretch reads PTSLDVPLIGKY. Residues 279–299 traverse the membrane as a helical segment; that stretch reads LMFTMVLVTFSIVTSVCVLNV. At 300 to 438 the chain is on the cytoplasmic side; sequence HHRSPSTHTM…WKYVAMVVDR (139 aa). The chain crosses the membrane as a helical span at residues 439 to 459; the sequence is LFLWIFVLVCVLGTVGLFLQP. Over 460 to 470 the chain is Extracellular; that stretch reads LFQNHIAATNP.

This sequence belongs to the ligand-gated ion channel (TC 1.A.9) family. Acetylcholine receptor (TC 1.A.9.1) subfamily. Beta-4/CHRNB4 sub-subfamily. As to quaternary structure, neuronal AChR is composed of two different types of subunits: alpha and beta. CHRNB4/Beta-4 subunit can be combined to CHRNA2/alpha-2, CHRNA3/alpha-3 or CHRNA4/alpha-4, CHRNA5/alpha-5 and CHRNB3/beta-3 to give rise to functional receptors.

The protein localises to the synaptic cell membrane. It localises to the cell membrane. It carries out the reaction Ca(2+)(in) = Ca(2+)(out). The catalysed reaction is K(+)(in) = K(+)(out). The enzyme catalyses Na(+)(in) = Na(+)(out). Its activity is regulated as follows. Activated by a myriad of ligands such as acetylcholine, cytisine, nicotine, choline and epibatidine. The heteropentamer CHRNA3:CHRNB4 activity is blocked by the alpha-conotoxin ImI and AuIB. Functionally, component of neuronal acetylcholine receptors (nAChRs) that function as pentameric, ligand-gated cation channels with high calcium permeability among other activities. nAChRs are excitatory neurotrasnmitter receptors formed by a collection of nAChR subunits known to mediate synaptic transmission in the nervous system and the neuromuscular junction. Each nAchR subunit confers differential attributes to channel properties, including activation, deactivation and desensitization kinetics, pH sensitivity, cation permeability, and binding to allosteric modulators. CHRNB4 forms heteropentameric neuronal acetylcholine receptors with CHRNA2, CHRNA3 and CHRNA4, as well as CHRNA5 and CHRNB3 as accesory subunits. CHRNA3:CHRNB4 being predominant in neurons of the autonomic ganglia, it is known as ganglionic nicotinic receptor. CHRNA3:CHRNB4 or CHRNA3:CHRNA5:CHRNB4 play also an important role in the habenulo-interpeduncular tract, modulating the mesolimbic dopamine system and affecting reward circuits and addiction. Hypothalamic CHRNA3:CHRNB4 nAChR activation by nicotine leads to activation of POMC neurons and a decrease in food intake. This Gallus gallus (Chicken) protein is Neuronal acetylcholine receptor subunit beta-4 (CHRNB4).